The primary structure comprises 229 residues: Cytochrome c oxidase subunit 2 (229 aa).

Residues 1-14 lie on the Mitochondrial intermembrane side of the membrane; sequence MANPSQFGFQDASS. Residues 15 to 45 form a helical membrane-spanning segment; that stretch reads PIMEELVEFHDHALMVALAICSLVLYLLALM. Residues 46 to 58 are Mitochondrial matrix-facing; it reads LVEKLSSNTVDAQ. Residues 59 to 86 form a helical membrane-spanning segment; the sequence is EVELIWTILPAIVLILLALPSLQILYMM. Residues 87–229 are Mitochondrial intermembrane-facing; that stretch reads DEIDEPDLTL…SWSSLLSTDS (143 aa). Cu cation contacts are provided by His160, Cys195, Glu197, Cys199, His203, and Met206. Glu197 serves as a coordination point for Mg(2+).

The protein belongs to the cytochrome c oxidase subunit 2 family. Component of the cytochrome c oxidase (complex IV, CIV), a multisubunit enzyme composed of 14 subunits. The complex is composed of a catalytic core of 3 subunits MT-CO1, MT-CO2 and MT-CO3, encoded in the mitochondrial DNA, and 11 supernumerary subunits COX4I, COX5A, COX5B, COX6A, COX6B, COX6C, COX7A, COX7B, COX7C, COX8 and NDUFA4, which are encoded in the nuclear genome. The complex exists as a monomer or a dimer and forms supercomplexes (SCs) in the inner mitochondrial membrane with NADH-ubiquinone oxidoreductase (complex I, CI) and ubiquinol-cytochrome c oxidoreductase (cytochrome b-c1 complex, complex III, CIII), resulting in different assemblies (supercomplex SCI(1)III(2)IV(1) and megacomplex MCI(2)III(2)IV(2)). Found in a complex with TMEM177, COA6, COX18, COX20, SCO1 and SCO2. Interacts with TMEM177 in a COX20-dependent manner. Interacts with COX20. Interacts with COX16. It depends on Cu cation as a cofactor.

The protein localises to the mitochondrion inner membrane. It carries out the reaction 4 Fe(II)-[cytochrome c] + O2 + 8 H(+)(in) = 4 Fe(III)-[cytochrome c] + 2 H2O + 4 H(+)(out). Functionally, component of the cytochrome c oxidase, the last enzyme in the mitochondrial electron transport chain which drives oxidative phosphorylation. The respiratory chain contains 3 multisubunit complexes succinate dehydrogenase (complex II, CII), ubiquinol-cytochrome c oxidoreductase (cytochrome b-c1 complex, complex III, CIII) and cytochrome c oxidase (complex IV, CIV), that cooperate to transfer electrons derived from NADH and succinate to molecular oxygen, creating an electrochemical gradient over the inner membrane that drives transmembrane transport and the ATP synthase. Cytochrome c oxidase is the component of the respiratory chain that catalyzes the reduction of oxygen to water. Electrons originating from reduced cytochrome c in the intermembrane space (IMS) are transferred via the dinuclear copper A center (CU(A)) of subunit 2 and heme A of subunit 1 to the active site in subunit 1, a binuclear center (BNC) formed by heme A3 and copper B (CU(B)). The BNC reduces molecular oxygen to 2 water molecules using 4 electrons from cytochrome c in the IMS and 4 protons from the mitochondrial matrix. The polypeptide is Cytochrome c oxidase subunit 2 (MT-CO2) (Struthio camelus (Common ostrich)).